The chain runs to 784 residues: Transcriptional activator somA (784 aa).

One can recognise a LisH domain in the interval 43–75; it reads MINNLNTYIYDYFLKRGYHECARALVKDESIKL. Residues 75 to 84 are compositionally biased toward polar residues; the sequence is LNTEPPTKTS. Disordered stretches follow at residues 75–122, 212–295, 424–726, and 764–784; these read LNTE…PNLA, GLSQ…SQAL, MMAR…DLSI, and GFDPNISYPTDGVETGAGDGL. The segment covering 103-117 has biased composition (basic and acidic residues); that stretch reads DSKDGDKIKIPDDLP. Low complexity predominate over residues 215–233; the sequence is QQQIAQLQKNQQMHMMQQM. The span at 234–244 shows a compositional bias: basic and acidic residues; sequence QREHSDMDMNG. The segment covering 247–259 has biased composition (low complexity); sequence PQSPSSAENAPSP. Residues 453 to 467 show a composition bias toward polar residues; that stretch reads SPQGSRAGTSPNPNE. Residues 564–592 show a composition bias toward low complexity; the sequence is QQQQGQPMGPQQSPAQQPQSTGTPQTQNS. Positions 607-624 are enriched in polar residues; sequence RTSPQSQNAAPPTPQQAN. A compositionally biased stretch (basic and acidic residues) spans 629 to 638; that stretch reads KKREPKDTAR. 2 stretches are compositionally biased toward low complexity: residues 644–661 and 691–701; these read KQPAAAAAAANTAATPSS and PTTSAPQQPTS. Positions 702–715 are enriched in pro residues; it reads APAPQPIVQQPPPD.

Belongs to the FLO8 family. In terms of assembly, interacts with ptaB.

It localises to the nucleus. Functionally, transcription factor that controls the expression of genes related to the process of conidiation and adherence and regulates biofilm formation. Controls conidiation and adhesion primarily by affecting the expression of the three regulatory genes flbB, stuA and medA. Required for virulence in an egg and a mouse infection model. The sequence is that of Transcriptional activator somA from Aspergillus fumigatus (strain ATCC MYA-4609 / CBS 101355 / FGSC A1100 / Af293) (Neosartorya fumigata).